The sequence spans 275 residues: Nitrogenase iron protein 2 (275 aa).

9 to 16 (GKGGIGKS) contacts ATP. Position 97 (Cys97) interacts with [4Fe-4S] cluster. Arg100 bears the ADP-ribosylarginine; by dinitrogenase reductase ADP-ribosyltransferase mark. Cys132 contributes to the [4Fe-4S] cluster binding site.

Belongs to the NifH/BchL/ChlL family. As to quaternary structure, homodimer. [4Fe-4S] cluster serves as cofactor. The reversible ADP-ribosylation of Arg-100 inactivates the nitrogenase reductase and regulates nitrogenase activity.

The catalysed reaction is N2 + 8 reduced [2Fe-2S]-[ferredoxin] + 16 ATP + 16 H2O = H2 + 8 oxidized [2Fe-2S]-[ferredoxin] + 2 NH4(+) + 16 ADP + 16 phosphate + 6 H(+). Functionally, the key enzymatic reactions in nitrogen fixation are catalyzed by the nitrogenase complex, which has 2 components: the iron protein (component 2) and a component 1 which is either a molybdenum-iron protein, a vanadium-iron, or an iron-iron protein. In Rhodobacter capsulatus (Rhodopseudomonas capsulata), this protein is Nitrogenase iron protein 2 (anfH).